Here is a 23-residue protein sequence, read N- to C-terminus: MALNLQDKQAIVAEVSEVAKGAL.

The protein belongs to the universal ribosomal protein uL10 family. In terms of assembly, part of the ribosomal stalk of the 50S ribosomal subunit. The N-terminus interacts with L11 and the large rRNA to form the base of the stalk. The C-terminus forms an elongated spine to which L12 dimers bind in a sequential fashion forming a multimeric L10(L12)X complex.

In terms of biological role, forms part of the ribosomal stalk, playing a central role in the interaction of the ribosome with GTP-bound translation factors. The sequence is that of Large ribosomal subunit protein uL10 (rplJ) from Klebsiella pneumoniae.